Consider the following 178-residue polypeptide: Large ribosomal subunit protein uL6 (178 aa).

The protein belongs to the universal ribosomal protein uL6 family. In terms of assembly, part of the 50S ribosomal subunit.

In terms of biological role, this protein binds to the 23S rRNA, and is important in its secondary structure. It is located near the subunit interface in the base of the L7/L12 stalk, and near the tRNA binding site of the peptidyltransferase center. The polypeptide is Large ribosomal subunit protein uL6 (Streptococcus pneumoniae serotype 4 (strain ATCC BAA-334 / TIGR4)).